A 331-amino-acid chain; its full sequence is Putative peptidyl-prolyl cis-trans isomerase RC0542 (331 aa).

Residues 33-54 (EQTASNNSSTDENQTSINNEPP) are disordered. Residues 128-226 (GHVVTVFYQI…SNEVKIYDDE (99 aa)) form the PPIase FKBP-type domain.

The catalysed reaction is [protein]-peptidylproline (omega=180) = [protein]-peptidylproline (omega=0). The polypeptide is Putative peptidyl-prolyl cis-trans isomerase RC0542 (Rickettsia conorii (strain ATCC VR-613 / Malish 7)).